The chain runs to 168 residues: ATP synthase F(1) complex subunit delta, mitochondrial (168 aa).

The N-terminal 22 residues, 1 to 22 (MLPAALLRHPGLRRLVLQARTY), are a transit peptide targeting the mitochondrion. Residues Lys136 and Lys165 each carry the N6-acetyllysine; alternate modification. Residues Lys136 and Lys165 each carry the N6-succinyllysine; alternate modification.

It belongs to the ATPase epsilon chain family. As to quaternary structure, component of the ATP synthase complex composed at least of ATP5F1A/subunit alpha, ATP5F1B/subunit beta, ATP5MC1/subunit c (homooctomer), MT-ATP6/subunit a, MT-ATP8/subunit 8, ATP5ME/subunit e, ATP5MF/subunit f, ATP5MG/subunit g, ATP5MK/subunit k, ATP5MJ/subunit j, ATP5F1C/subunit gamma, ATP5F1D/subunit delta, ATP5F1E/subunit epsilon, ATP5PF/subunit F6, ATP5PB/subunit b, ATP5PD/subunit d, ATP5PO/subunit OSCP. ATP synthase complex consists of a soluble F(1) head domain (subunits alpha(3) and beta(3)) - the catalytic core - and a membrane F(0) domain - the membrane proton channel (subunits c, a, 8, e, f, g, k and j). These two domains are linked by a central stalk (subunits gamma, delta, and epsilon) rotating inside the F1 region and a stationary peripheral stalk (subunits F6, b, d, and OSCP). Component of a complex composed at least by ATPIF1, ATP5F1A, ATP5F1B, ATP5F1C AND ATP5F1E.

It localises to the mitochondrion. The protein localises to the mitochondrion inner membrane. Subunit delta, of the mitochondrial membrane ATP synthase complex (F(1)F(0) ATP synthase or Complex V) that produces ATP from ADP in the presence of a proton gradient across the membrane which is generated by electron transport complexes of the respiratory chain. ATP synthase complex consist of a soluble F(1) head domain - the catalytic core - and a membrane F(1) domain - the membrane proton channel. These two domains are linked by a central stalk rotating inside the F(1) region and a stationary peripheral stalk. During catalysis, ATP synthesis in the catalytic domain of F(1) is coupled via a rotary mechanism of the central stalk subunits to proton translocation. In vivo, can only synthesize ATP although its ATP hydrolase activity can be activated artificially in vitro. With the central stalk subunit gamma, is essential for the biogenesis of F(1) catalytic part of the ATP synthase complex namely in the formation of F1 assembly intermediate. This chain is ATP synthase F(1) complex subunit delta, mitochondrial, found in Rattus norvegicus (Rat).